Consider the following 179-residue polypeptide: Pyridoxal 5'-phosphate synthase subunit PdxT (179 aa).

48 to 50 contacts L-glutamine; sequence GES. Cys79 serves as the catalytic Nucleophile. L-glutamine is bound by residues Arg101 and 127 to 128; that span reads IR. Residues His163 and Glu165 each act as charge relay system in the active site.

The protein belongs to the glutaminase PdxT/SNO family. In the presence of PdxS, forms a dodecamer of heterodimers. Only shows activity in the heterodimer.

The catalysed reaction is aldehydo-D-ribose 5-phosphate + D-glyceraldehyde 3-phosphate + L-glutamine = pyridoxal 5'-phosphate + L-glutamate + phosphate + 3 H2O + H(+). It catalyses the reaction L-glutamine + H2O = L-glutamate + NH4(+). It functions in the pathway cofactor biosynthesis; pyridoxal 5'-phosphate biosynthesis. Its function is as follows. Catalyzes the hydrolysis of glutamine to glutamate and ammonia as part of the biosynthesis of pyridoxal 5'-phosphate. The resulting ammonia molecule is channeled to the active site of PdxS. This is Pyridoxal 5'-phosphate synthase subunit PdxT from Francisella tularensis subsp. novicida (strain U112).